Consider the following 508-residue polypeptide: Inosine-5'-monophosphate dehydrogenase (508 aa).

2 consecutive CBS domains span residues 111-170 (FITD…EITL) and 174-230 (MTTN…PDAS). Residues D267 and 317–319 (GMG) contribute to the NAD(+) site. K(+) is bound by residues G319 and G321. S322 is a binding site for IMP. C324 is a binding site for K(+). The active-site Thioimidate intermediate is the C324. IMP is bound by residues 357 to 359 (DGG), 380 to 381 (GF), and 404 to 408 (YRGMA). R420 acts as the Proton acceptor in catalysis. IMP is bound at residue Q432. G492 provides a ligand contact to K(+).

This sequence belongs to the IMPDH/GMPR family. As to quaternary structure, homotetramer. It depends on K(+) as a cofactor.

The enzyme catalyses IMP + NAD(+) + H2O = XMP + NADH + H(+). Its pathway is purine metabolism; XMP biosynthesis via de novo pathway; XMP from IMP: step 1/1. Its activity is regulated as follows. Mycophenolic acid (MPA) is a non-competitive inhibitor that prevents formation of the closed enzyme conformation by binding to the same site as the amobile flap. In contrast, mizoribine monophosphate (MZP) is a competitive inhibitor that induces the closed conformation. MPA is a potent inhibitor of mammalian IMPDHs but a poor inhibitor of the bacterial enzymes. MZP is a more potent inhibitor of bacterial IMPDH. Catalyzes the conversion of inosine 5'-phosphate (IMP) to xanthosine 5'-phosphate (XMP), the first committed and rate-limiting step in the de novo synthesis of guanine nucleotides, and therefore plays an important role in the regulation of cell growth. In Leptospira interrogans serogroup Icterohaemorrhagiae serovar Lai (strain 56601), this protein is Inosine-5'-monophosphate dehydrogenase.